The chain runs to 380 residues: RNA-binding motif protein, Y chromosome (380 aa).

In terms of domain architecture, RRM spans 8 to 86; it reads GKIFIGGLNI…KRIKVKQARR (79 aa). 2 disordered regions span residues 82–226 and 279–358; these read KQAR…STSR and HEAP…YSAS. A compositionally biased stretch (polar residues) spans 166–178; sequence RSATSAQTRSNTG. 2 stretches are compositionally biased toward basic and acidic residues: residues 180–190 and 333–351; these read RGREPHRREIS and IDREYFDREGRQERGHSPK.

In terms of assembly, interacts with SRSF3/SRP20, SRSF9/SRP30, SRSF5/SRP40, and SRSF6/SRP55; this interaction inhibits SRSF family member pre-mRNA splicing. Interacts with splicing factor proteins and KHDRBS3. In terms of tissue distribution, testis-specific.

The protein resides in the nucleus. Functionally, RNA-binding protein involved in pre-mRNA splicing. Required for sperm development. Acts additively with TRA2B to promote exon 7 inclusion of the survival motor neuron SMN. Binds non-specifically to mRNAs. This chain is RNA-binding motif protein, Y chromosome, found in Mus musculus (Mouse).